The following is a 479-amino-acid chain: Glutamyl-tRNA reductase (479 aa).

Residues 48-51 (TCNR), serine 104, 109-111 (ERQ), and glutamine 115 each bind substrate. Cysteine 49 serves as the catalytic Nucleophile. An NADP(+)-binding site is contributed by 189 to 194 (GAGKMG). The interval 417 to 455 (DAGRSLAEAPDADTPDLGEAPSRCPYMTHDPGGDGTETE) is disordered.

This sequence belongs to the glutamyl-tRNA reductase family. As to quaternary structure, homodimer.

The catalysed reaction is (S)-4-amino-5-oxopentanoate + tRNA(Glu) + NADP(+) = L-glutamyl-tRNA(Glu) + NADPH + H(+). Its pathway is porphyrin-containing compound metabolism; protoporphyrin-IX biosynthesis; 5-aminolevulinate from L-glutamyl-tRNA(Glu): step 1/2. Its function is as follows. Catalyzes the NADPH-dependent reduction of glutamyl-tRNA(Glu) to glutamate 1-semialdehyde (GSA). This Salinibacter ruber (strain DSM 13855 / M31) protein is Glutamyl-tRNA reductase.